The primary structure comprises 215 residues: Ribonuclease T (215 aa).

The Exonuclease domain maps to 20-194 (VVIDVETAGF…YDTLQTAKLF (175 aa)). Mg(2+) contacts are provided by D23, E25, H181, and D186. H181 acts as the Proton donor/acceptor in catalysis.

It belongs to the RNase T family. Homodimer. It depends on Mg(2+) as a cofactor.

In terms of biological role, trims short 3' overhangs of a variety of RNA species, leaving a one or two nucleotide 3' overhang. Responsible for the end-turnover of tRNA: specifically removes the terminal AMP residue from uncharged tRNA (tRNA-C-C-A). Also appears to be involved in tRNA biosynthesis. This is Ribonuclease T from Yersinia pseudotuberculosis serotype O:1b (strain IP 31758).